Consider the following 201-residue polypeptide: Recombination protein RecR (201 aa).

Residues 60–75 (CTSCGNVDTSDPCTIC) form a C4-type zinc finger. The 96-residue stretch at 83–178 (TTLVVVEDVS…KVTRLAHGVP (96 aa)) folds into the Toprim domain.

This sequence belongs to the RecR family.

Functionally, may play a role in DNA repair. It seems to be involved in an RecBC-independent recombinational process of DNA repair. It may act with RecF and RecO. In Methylobacterium radiotolerans (strain ATCC 27329 / DSM 1819 / JCM 2831 / NBRC 15690 / NCIMB 10815 / 0-1), this protein is Recombination protein RecR.